Here is a 398-residue protein sequence, read N- to C-terminus: Dihydroorotase (398 aa).

H58 and H60 together coordinate Zn(2+). Substrate contacts are provided by residues 60–62 (HFR) and N92. D151, H178, and H215 together coordinate Zn(2+). N256 provides a ligand contact to substrate. D283 is a binding site for Zn(2+). D283 is a catalytic residue. Substrate contacts are provided by residues H287 and 297 to 298 (PG).

The protein belongs to the metallo-dependent hydrolases superfamily. DHOase family. Class I DHOase subfamily. Zn(2+) is required as a cofactor.

It carries out the reaction (S)-dihydroorotate + H2O = N-carbamoyl-L-aspartate + H(+). It participates in pyrimidine metabolism; UMP biosynthesis via de novo pathway; (S)-dihydroorotate from bicarbonate: step 3/3. Its function is as follows. Catalyzes the reversible cyclization of carbamoyl aspartate to dihydroorotate. The chain is Dihydroorotase from Clostridium botulinum (strain Eklund 17B / Type B).